A 325-amino-acid chain; its full sequence is tRNA N6-adenosine threonylcarbamoyltransferase (325 aa).

Positions 110 and 114 each coordinate Fe cation. Residues 133–137, Asp-165, Gly-178, and Asn-268 contribute to the substrate site; that span reads MVSGG. Asp-296 lines the Fe cation pocket.

This sequence belongs to the KAE1 / TsaD family. Requires Fe(2+) as cofactor.

The protein resides in the cytoplasm. The catalysed reaction is L-threonylcarbamoyladenylate + adenosine(37) in tRNA = N(6)-L-threonylcarbamoyladenosine(37) in tRNA + AMP + H(+). Required for the formation of a threonylcarbamoyl group on adenosine at position 37 (t(6)A37) in tRNAs that read codons beginning with adenine. Is involved in the transfer of the threonylcarbamoyl moiety of threonylcarbamoyl-AMP (TC-AMP) to the N6 group of A37, together with TsaE and TsaB. TsaD likely plays a direct catalytic role in this reaction. The sequence is that of tRNA N6-adenosine threonylcarbamoyltransferase from Thermosipho melanesiensis (strain DSM 12029 / CIP 104789 / BI429).